A 192-amino-acid chain; its full sequence is Spermatogenesis-associated protein 3 (192 aa).

Over residues 1–15 (MKKVKKKRSEARRHR) the composition is skewed to basic residues. Disordered regions lie at residues 1-65 (MKKV…TTSR) and 161-184 (SRKP…GSGG). A compositionally biased stretch (low complexity) spans 19–59 (SQHASSNSTSQQPSPESTPQQPSPESTPQQPSPESTPQHSS).

Its subcellular location is the cell projection. The protein resides in the cilium. The protein localises to the flagellum. In Homo sapiens (Human), this protein is Spermatogenesis-associated protein 3 (SPATA3).